A 423-amino-acid polypeptide reads, in one-letter code: Subtilisin-like protease 2 (423 aa).

The first 17 residues, 1-17 (MQLLNLGLLLLLPFVAG), serve as a signal peptide directing secretion. Positions 18–123 (EIAPQPEPLR…VHPDQHVYLA (106 aa)) are excised as a propeptide. Residues 37–123 (QYIVTLKEGL…VHPDQHVYLA (87 aa)) form the Inhibitor I9 domain. The 292-residue stretch at 132 to 423 (RWGLGYMSSK…RKFTLPKNTK (292 aa)) folds into the Peptidase S8 domain. Active-site charge relay system residues include Asp170 and His202. 3 N-linked (GlcNAc...) asparagine glycosylation sites follow: Asn249, Asn262, and Asn349. Ser358 (charge relay system) is an active-site residue. Asn389 carries N-linked (GlcNAc...) asparagine glycosylation.

This sequence belongs to the peptidase S8 family.

It is found in the secreted. Functionally, secreted subtilisin-like serine protease with keratinolytic activity that contributes to pathogenicity. The protein is Subtilisin-like protease 2 (SUB2) of Arthroderma otae (strain ATCC MYA-4605 / CBS 113480) (Microsporum canis).